The sequence spans 815 residues: Ataxin-1 (815 aa).

The span at 1–41 shows a compositional bias: basic and acidic residues; that stretch reads MKSNQERSNECLPPKKREIPATSRSSEEKAPTLPSDNHRVE. Residues 1–63 form a disordered region; that stretch reads MKSNQERSNE…GHGGGRHGPA (63 aa). Lysine 16 participates in a covalent cross-link: Glycyl lysine isopeptide (Lys-Gly) (interchain with G-Cter in SUMO). The segment covering 49–61 has biased composition (gly residues); that stretch reads NPGGRGHGGGRHG. A phosphoserine mark is found at serine 82 and serine 88. Disordered regions lie at residues 185–270, 329–355, and 397–424; these read GSLS…PVHL, EKSR…VPHP, and VQQA…PGHR. Lysine 194 participates in a covalent cross-link: Glycyl lysine isopeptide (Lys-Gly) (interchain with G-Cter in SUMO). Over residues 197-226 the composition is skewed to low complexity; the sequence is QQQQQQQQQQQQHQHQQQQQQQQQQQQQQH. 2 positions are modified to phosphoserine: serine 238 and serine 253. A compositionally biased stretch (polar residues) spans 243-260; sequence QQNQYVHISSSPQNTGRT. Residues 494-604 form a self-association region; it reads VGSTDMEASG…TEDFIQSAEI (111 aa). Positions 538–815 are interaction with USP7; that stretch reads LVTQAAYPAM…CIEGRSNVGK (278 aa). Positions 540-766 are RNA-binding; sequence TQAAYPAMVQ…FLTKIEPSKP (227 aa). The 132-residue stretch at 562-693 folds into the AXH domain; the sequence is SPAAAPPTLP…SLTLKNLKNG (132 aa). Glycyl lysine isopeptide (Lys-Gly) (interchain with G-Cter in SUMO) cross-links involve residues lysine 609, lysine 696, and lysine 745. Positions 762-798 are disordered; sequence EPSKPAATRKRRWSAPESRKLEKSEDEPPLTLPKPSL. At serine 775 the chain carries Phosphoserine. The short motif at 794–797 is the Nuclear localization signal element; sequence PKPS.

This sequence belongs to the ATXN1 family. In terms of assembly, homooligomer. Interacts with CIC. Interacts with ANP32A, PQBP1, UBQLN4, ATXN1L and USP7. Directly interacts with RBPJ; this interaction is disrupted in the presence of Notch intracellular domain. Competes with ATXN1L for RBPJ-binding. Found in a complex with CIC and ATXN1L. In terms of processing, ubiquitinated by UBE3A, leading to its degradation by the proteasome. The presence of expanded poly-Gln repeats in spinocerebellar ataxia 1 (SCA1) patients impairs ubiquitination and degradation, leading to accumulation of ATXN1 in neurons and subsequent toxicity. Post-translationally, phosphorylation at Ser-775 increases the pathogenicity of proteins with an expanded polyglutamine tract. Sumoylation is dependent on nuclear localization and phosphorylation at Ser-775. It is reduced in the presence of an expanded polyglutamine tract. As to expression, widely expressed throughout the body.

It is found in the cytoplasm. The protein resides in the nucleus. Chromatin-binding factor that repress Notch signaling in the absence of Notch intracellular domain by acting as a CBF1 corepressor. Binds to the HEY promoter and might assist, along with NCOR2, RBPJ-mediated repression. Binds RNA in vitro. May be involved in RNA metabolism. In concert with CIC and ATXN1L, involved in brain development. The chain is Ataxin-1 (ATXN1) from Homo sapiens (Human).